The primary structure comprises 192 residues: uncharacterized protein (192 aa).

Residues 53 to 111 (CLKESVERARKVYLSLLKDYERKSREYEKAYENYLKELRTYRETLYRIKEDLKFYERIC) are a coiled coil.

This is an uncharacterized protein from Aquifex aeolicus (strain VF5).